The primary structure comprises 378 residues: Chaperone protein DnaJ (378 aa).

Residues 5–70 (DYYETLGVSQ…QKRAAYDQYG (66 aa)) form the J domain. The CR-type zinc finger occupies 134 to 212 (GKSLEIKVPT…CRGQGRVEKT (79 aa)). Residues Cys-147, Cys-150, Cys-164, Cys-167, Cys-186, Cys-189, Cys-200, and Cys-203 each contribute to the Zn(2+) site. CXXCXGXG motif repeat units lie at residues 147-154 (CEPCDGSG), 164-171 (CSTCHGHG), 186-193 (CPTCSGKG), and 200-207 (CTSCRGQG).

This sequence belongs to the DnaJ family. Homodimer. Zn(2+) serves as cofactor.

It is found in the cytoplasm. Functionally, participates actively in the response to hyperosmotic and heat shock by preventing the aggregation of stress-denatured proteins and by disaggregating proteins, also in an autonomous, DnaK-independent fashion. Unfolded proteins bind initially to DnaJ; upon interaction with the DnaJ-bound protein, DnaK hydrolyzes its bound ATP, resulting in the formation of a stable complex. GrpE releases ADP from DnaK; ATP binding to DnaK triggers the release of the substrate protein, thus completing the reaction cycle. Several rounds of ATP-dependent interactions between DnaJ, DnaK and GrpE are required for fully efficient folding. Also involved, together with DnaK and GrpE, in the DNA replication of plasmids through activation of initiation proteins. The sequence is that of Chaperone protein DnaJ from Colwellia psychrerythraea (strain 34H / ATCC BAA-681) (Vibrio psychroerythus).